A 468-amino-acid chain; its full sequence is Adenylosuccinate synthetase (468 aa).

Residues 23-29 (GDEGKGK) and 51-53 (GHE) contribute to the GTP site. Aspartate 24 serves as the catalytic Proton acceptor. Mg(2+) is bound by residues aspartate 24 and glycine 51. IMP-binding positions include 24–27 (DEGK), 49–52 (NSGH), threonine 142, arginine 156, asparagine 238, threonine 253, and arginine 317. The active-site Proton donor is histidine 52. 313-319 (VTTGRTR) contacts substrate. GTP contacts are provided by residues arginine 319 and 345–347 (KLD).

Belongs to the adenylosuccinate synthetase family. As to quaternary structure, homodimer. Mg(2+) serves as cofactor.

Its subcellular location is the cytoplasm. It carries out the reaction IMP + L-aspartate + GTP = N(6)-(1,2-dicarboxyethyl)-AMP + GDP + phosphate + 2 H(+). It functions in the pathway purine metabolism; AMP biosynthesis via de novo pathway; AMP from IMP: step 1/2. Functionally, plays an important role in the salvage pathway for purine nucleotide biosynthesis. Catalyzes the first committed step in the biosynthesis of AMP from IMP. This chain is Adenylosuccinate synthetase, found in Theileria annulata.